Here is a 78-residue protein sequence, read N- to C-terminus: Small ribosomal subunit protein bS18 (78 aa).

This sequence belongs to the bacterial ribosomal protein bS18 family. In terms of assembly, part of the 30S ribosomal subunit. Forms a tight heterodimer with protein bS6.

In terms of biological role, binds as a heterodimer with protein bS6 to the central domain of the 16S rRNA, where it helps stabilize the platform of the 30S subunit. In Ligilactobacillus salivarius (strain UCC118) (Lactobacillus salivarius), this protein is Small ribosomal subunit protein bS18.